The following is a 186-amino-acid chain: MASKVVFFAAALMAAMVAISGAQLSESEMRFRDRQCQREVQDSPLDACRQVLDRQLTGRERFQPMFRRPGALGLRMQCCQQLQDVSRECRCAAIRRMVRSYEESMPMPLEQGWSSSSSEYYGGEGSSSEQGYYGEGSSEEGYYGEQQQQPGMTRVRLTRARQYAAQLPSMCRVEPQQCSIFAAGQY.

A signal peptide spans 1–22; the sequence is MASKVVFFAAALMAAMVAISGA. The segment at 108 to 155 is disordered; sequence PLEQGWSSSSSEYYGGEGSSSEQGYYGEGSSEEGYYGEQQQQPGMTRV. The segment covering 110-149 has biased composition (low complexity); it reads EQGWSSSSSEYYGGEGSSSEQGYYGEGSSEEGYYGEQQQQ.

This sequence belongs to the 2S seed storage albumins family.

It is found in the secreted. Seed storage protein. The chain is 19 kDa globulin from Oryza sativa subsp. japonica (Rice).